We begin with the raw amino-acid sequence, 165 residues long: Nucleotide-binding protein PMN2A_1813 (165 aa).

It belongs to the YajQ family.

In terms of biological role, nucleotide-binding protein. This Prochlorococcus marinus (strain NATL2A) protein is Nucleotide-binding protein PMN2A_1813.